The chain runs to 452 residues: MVLNIKAPENIVLKPTITVFGVGGAGSNAVNNMISANLQGANFVVANTDAQSLEHSLCTNKIQLGVSTTRGLGAGASPEVGALAAQESESEIRNYLENSNMVFITAGMGGGTGTGSAPVIARIAKELGILTVGVVTKPFHFEGGHRMKTADKGLIELQQFVDTLIVIPNQNLFRIANEQTTFADAFKMADDVLHAGVRGVTDLMIMPGLINLDFADIKAVMSEMGKAMMGTGEASGEDRAIKAAESAISNPLLDHSSMCGARGVLINITGGSDMTLFEVDNAANRIREEVDNLDANIIFGSTFNPELKGMIRVSVVATGIDADKVPTYKPAIAETTNIVPEETYNKAIAQPTQIEEMPDFNSYSTENIEITDSPINQNFIGNEKELGLHANTFNKSEDDSPKPSFLGKIWGSLRASNNQTLERKNVVVSTLDQDNKESDIHDIPAFLRKKRD.

Residues 24–28, 111–113, Glu142, Arg146, and Asp190 each bind GTP; these read GAGSN and GTG. A disordered region spans residues 432–452; it reads DQDNKESDIHDIPAFLRKKRD. Residues 433-442 show a composition bias toward basic and acidic residues; that stretch reads QDNKESDIHD.

Belongs to the FtsZ family. Homodimer. Polymerizes to form a dynamic ring structure in a strictly GTP-dependent manner. Interacts directly with several other division proteins.

The protein resides in the cytoplasm. Its function is as follows. Essential cell division protein that forms a contractile ring structure (Z ring) at the future cell division site. The regulation of the ring assembly controls the timing and the location of cell division. One of the functions of the FtsZ ring is to recruit other cell division proteins to the septum to produce a new cell wall between the dividing cells. Binds GTP and shows GTPase activity. This chain is Cell division protein FtsZ, found in Rickettsia conorii (strain ATCC VR-613 / Malish 7).